Consider the following 551-residue polypeptide: Protein GPR107 (551 aa).

A signal peptide spans 1 to 33; that stretch reads MAVPVPLGRFGSFCLRLLRLLALLELLVHPVLG. The Extracellular segment spans residues 40–262; that stretch reads LKDDVRHKVH…YLSAGEIPLP (223 aa). N-linked (GlcNAc...) asparagine glycosylation is found at Asn-64 and Asn-209. Cys-106 and Cys-226 form a disulfide bridge. Residues 263 to 283 form a helical membrane-spanning segment; the sequence is KLYVSMALFFFLSGTIWIHIL. Over 284–292 the chain is Cytoplasmic; it reads RKRRNDVFK. The helical transmembrane segment at 293–313 threads the bilayer; that stretch reads IHWLMAALPFTKSLSLVFHAI. Topologically, residues 314 to 336 are extracellular; the sequence is DYHYISSQGFPIEGWAVVYYITH. A helical transmembrane segment spans residues 337–357; it reads LLKGALLFITIALIGTGWAFI. Residues 358–367 are Cytoplasmic-facing; sequence KHILSDKDKK. The chain crosses the membrane as a helical span at residues 368–388; the sequence is IFMIVIPLQVLANVAYIIIES. Topologically, residues 389 to 401 are extracellular; that stretch reads TEEGTTEYGLWKD. Residues 402 to 422 traverse the membrane as a helical segment; sequence SLFLVDLLCCGAILFPVVWSI. Residues 423 to 449 lie on the Cytoplasmic side of the membrane; sequence RHLQEASATDGKAAINLAKLRLFRHYY. Residues 450–470 form a helical membrane-spanning segment; the sequence is VLIVCYIYFTRIIAFLLKFAV. Residues 471 to 475 lie on the Extracellular side of the membrane; sequence PFQWK. Residues 476–495 traverse the membrane as a helical segment; it reads WLYQLLDETATLVFFVLTGY. Residues 496-551 lie on the Cytoplasmic side of the membrane; the sequence is KFRPASDNPYLQLSQEDDDLEMESVVTTSGVMENMKKVKKVSNGAVEPQGSWEGTA. Position 537 is a phosphoserine (Ser-537).

It belongs to the LU7TM family. Cleaved by FURIN to yield two fragments that remain associated via a disulfide bond.

Its subcellular location is the cell membrane. The protein localises to the golgi apparatus. It is found in the trans-Golgi network membrane. In terms of biological role, has been proposed to act as a receptor for neuronostatin, a peptide derived from the somatostatin/SST precursor. Involved in blood sugar regulation through the induction of glucagon in response to low glucose. In Mus musculus (Mouse), this protein is Protein GPR107 (Gpr107).